Reading from the N-terminus, the 372-residue chain is Germination protease (372 aa).

Positions 1 to 15 (MNRSIDLSMYSVRTD) are excised as a propeptide.

It belongs to the peptidase A25 family. In terms of assembly, homotetramer. Autoproteolytically processed. The inactive tetrameric zymogen termed p46 autoprocesses to a smaller form termed p41, which is active only during spore germination.

The catalysed reaction is Endopeptidase action with P4 Glu or Asp, P1 preferably Glu &gt; Asp, P1' hydrophobic and P2' Ala.. Functionally, initiates the rapid degradation of small, acid-soluble proteins during spore germination. This chain is Germination protease, found in Geobacillus sp. (strain WCH70).